The sequence spans 184 residues: 20.9 kDa protein (184 aa).

This is 20.9 kDa protein from Zymomonas mobilis subsp. mobilis (strain ATCC 10988 / DSM 424 / LMG 404 / NCIMB 8938 / NRRL B-806 / ZM1).